A 206-amino-acid chain; its full sequence is Small ribosomal subunit protein uS4 (206 aa).

Residues 96–156 (SRLDNIVYRL…KKSKNQLRIK (61 aa)) enclose the S4 RNA-binding domain.

This sequence belongs to the universal ribosomal protein uS4 family. As to quaternary structure, part of the 30S ribosomal subunit. Contacts protein S5. The interaction surface between S4 and S5 is involved in control of translational fidelity.

Functionally, one of the primary rRNA binding proteins, it binds directly to 16S rRNA where it nucleates assembly of the body of the 30S subunit. In terms of biological role, with S5 and S12 plays an important role in translational accuracy. This is Small ribosomal subunit protein uS4 from Buchnera aphidicola subsp. Cinara cedri (strain Cc).